Here is a 234-residue protein sequence, read N- to C-terminus: Homeobox protein ceh-51 (234 aa).

Disordered stretches follow at residues 128–154 and 209–234; these read PPSF…RTPF and QIKQ…HVIS. A DNA-binding region (homeobox) is located at residues 147–206; it reads RRGARTPFSDSQLYALRTRFEQCDTIKVDERRKLGAVIGLSPEQIKIWFQNRRFKLRKEK. Over residues 220–234 the composition is skewed to basic and acidic residues; that stretch reads SAKEEAEEDQKHVIS.

The protein belongs to the NK-2 homeobox family.

Its subcellular location is the nucleus. Functionally, required for mesoderm development, including specification of muscle and coelomocyte precursors. The sequence is that of Homeobox protein ceh-51 from Caenorhabditis elegans.